Consider the following 327-residue polypeptide: Ubiquinone biosynthesis O-methyltransferase, mitochondrial (327 aa).

S-adenosyl-L-methionine is bound by residues arginine 79, glycine 142, aspartate 165, and phenylalanine 210. 3 residues coordinate Mg(2+): glutamate 211, glutamate 214, and histidine 215.

The protein belongs to the class I-like SAM-binding methyltransferase superfamily. UbiG/COQ3 family. Component of a multi-subunit COQ enzyme complex, composed of at least COQ3, COQ4, COQ5, COQ6, COQ7 and COQ9. Mg(2+) is required as a cofactor.

It is found in the mitochondrion inner membrane. It carries out the reaction a 3,4-dihydroxy-5-(all-trans-polyprenyl)benzoate + S-adenosyl-L-methionine = a 4-hydroxy-3-methoxy-5-(all-trans-polyprenyl)benzoate + S-adenosyl-L-homocysteine + H(+). The enzyme catalyses a 3-demethylubiquinone + S-adenosyl-L-methionine = a ubiquinone + S-adenosyl-L-homocysteine. The catalysed reaction is a 3-demethylubiquinol + S-adenosyl-L-methionine = a ubiquinol + S-adenosyl-L-homocysteine + H(+). It participates in cofactor biosynthesis; ubiquinone biosynthesis. Its function is as follows. O-methyltransferase required for two non-consecutive steps during ubiquinone biosynthesis. Catalyzes the 2 O-methylation of 3,4-dihydroxy-5-(all-trans-polyprenyl)benzoic acid into 4-hydroxy-3-methoxy-5-(all-trans-polyprenyl)benzoic acid. Also catalyzes the last step of ubiquinone biosynthesis by mediating methylation of 3-demethylubiquinone into ubiquinone. Also able to mediate the methylation of 3-demethylubiquinol into ubiquinol. In Candida albicans (Yeast), this protein is Ubiquinone biosynthesis O-methyltransferase, mitochondrial.